We begin with the raw amino-acid sequence, 223 residues long: UPF0441 protein YgiB (223 aa).

The span at 178–195 (TVPKTAMAPKPATTTTVT) shows a compositional bias: low complexity. The disordered stretch occupies residues 178 to 223 (TVPKTAMAPKPATTTTVTRGGFGESVAKQSTMQRSAAGTSTRSMGG). A compositionally biased stretch (polar residues) spans 204–223 (AKQSTMQRSAAGTSTRSMGG).

This sequence belongs to the UPF0441 family.

In Salmonella paratyphi A (strain ATCC 9150 / SARB42), this protein is UPF0441 protein YgiB.